Consider the following 131-residue polypeptide: Profilin-3 (131 aa).

Belongs to the profilin family. As to quaternary structure, occurs in many kinds of cells as a complex with monomeric actin in a 1:1 ratio.

It is found in the cytoplasm. It localises to the cytoskeleton. Its function is as follows. Binds to actin and affects the structure of the cytoskeleton. At high concentrations, profilin prevents the polymerization of actin, whereas it enhances it at low concentrations. By binding to PIP2, it inhibits the formation of IP3 and DG. This is Profilin-3 from Malus domestica (Apple).